Here is a 547-residue protein sequence, read N- to C-terminus: Chaperonin GroEL (547 aa).

ATP contacts are provided by residues Thr-30–Pro-33, Lys-51, Asp-87–Thr-91, Gly-415, and Asp-496.

This sequence belongs to the chaperonin (HSP60) family. In terms of assembly, forms a cylinder of 14 subunits composed of two heptameric rings stacked back-to-back. Interacts with the co-chaperonin GroES.

It localises to the cytoplasm. The enzyme catalyses ATP + H2O + a folded polypeptide = ADP + phosphate + an unfolded polypeptide.. Its function is as follows. Together with its co-chaperonin GroES, plays an essential role in assisting protein folding. The GroEL-GroES system forms a nano-cage that allows encapsulation of the non-native substrate proteins and provides a physical environment optimized to promote and accelerate protein folding. This chain is Chaperonin GroEL, found in Chlorobium limicola (strain DSM 245 / NBRC 103803 / 6330).